The following is a 923-amino-acid chain: Protocadherin gamma-B5 (923 aa).

The signal sequence occupies residues 1-30; that stretch reads MGRGTGELGRAERLPVLFLFLLSLFCPALC. 6 consecutive Cadherin domains span residues 31 to 133, 134 to 242, 243 to 343, 344 to 448, 449 to 558, and 566 to 671; these read EQIR…TPKF, TQNS…PPVF, NRDV…SPEV, TFHS…APVF, HQAS…APRV, and DGSA…LPDI. Residues 31 to 687 are Extracellular-facing; sequence EQIRYRIPEE…SDPQAELQFY (657 aa). Asn415 and Asn541 each carry an N-linked (GlcNAc...) asparagine glycan. Residues 688 to 708 form a helical membrane-spanning segment; sequence LVVALALISVLFLLAVILAIA. Residues 709–923 lie on the Cytoplasmic side of the membrane; sequence LRLRRSSSPA…KKKSGKKEKK (215 aa). Disordered regions lie at residues 794–832 and 893–923; these read TSHP…WPNN and ATLT…KEKK. The span at 807–832 shows a compositional bias: polar residues; the sequence is WRFSQAQRPGTSGSQNGDDTGTWPNN. Residues 913-923 show a composition bias toward basic residues; the sequence is NKKKSGKKEKK.

The protein resides in the cell membrane. Functionally, potential calcium-dependent cell-adhesion protein. May be involved in the establishment and maintenance of specific neuronal connections in the brain. In Pan troglodytes (Chimpanzee), this protein is Protocadherin gamma-B5 (PCDHGB5).